Reading from the N-terminus, the 656-residue chain is MSEQNPTDSKNPELKKHTFEAEVAQLLHLVTHSLYSNSDIFVRELVSNASDACDKLRFEATNDDSLYEDDGELRIRIAVDEDAKTITFTDNGIGMNEADAIENLGTIAKSGTKAFLDKLSDSQKQDGQLIGQFGVGFYSGFIVADTISVETRKAGDAAENGVRWVSDGTGSFTVENISKTERGSSITLHLKEQYSEGEDGYLDRSKIKRLVNKYSDHISLPIQMRKEIWQEDEVEEGDDTPANGQMVLTDEWETINKASALWTRTASDVEDDEYVDFYKNITYDMDAPLTWTHNRVEGRVQYTQLLYIPKKAPVDLYTREQQHGLKLYVKRVFIMDDAEQLLPMYLRFVKGVIDSADLPLNVSREILQESRDVKSIRDGNARRILTLLASLANSEDADKQEKFAQFYAEFGDVIKEGVGEDMGNQERIAKLLRYATSTQDGEMTSFEDYKARMKDGQKAIYYLTADNLAAAKNSPQLELFKKKGIEVILMTSRVDEWAMNFLTSFDETPLQNIAKGAVDLGDLQDEAEKAEAEKAQETMKPVVDKLKAALGDRAKDVKVSTRLVDSPACLVVGEGELSPQMIQMLKQMGQDVPESKPTLEVNPDHPLIKKLESSEQSAEDFDKLAQVIFDQALLADGGQLEDPAAYLRRVNELLMK.

Residues 1–364 (MSEQNPTDSK…SADLPLNVSR (364 aa)) form an a; substrate-binding region. Residues 365-583 (EILQESRDVK…EGELSPQMIQ (219 aa)) form a b region. A c region spans residues 584–656 (MLKQMGQDVP…LRRVNELLMK (73 aa)).

This sequence belongs to the heat shock protein 90 family. Homodimer.

Its subcellular location is the cytoplasm. Molecular chaperone. Has ATPase activity. The sequence is that of Chaperone protein HtpG from Psychrobacter arcticus (strain DSM 17307 / VKM B-2377 / 273-4).